The sequence spans 205 residues: MSRGALIVFEGLDKSGKTTQCMNIMESIPTNTIKYLNFPQRSTVTGKMIDDYLTRKKTYNDHIVNLLFCANRWEFASFIQEQLEQGITLIVDRYAFSGVAYATAKGASMTLSKSYESGLPKPDLVIFLESGSKEINRNVGEEIYEDVAFQQKVLQEYKKMIEEGEDIHWQIISSEFEEDVKKELIKNIVIEAIHTVTGPVGQLWM.

11 to 18 (GLDKSGKT) is an ATP binding site.

This sequence belongs to the thymidylate kinase family. As to quaternary structure, homodimer; the dimer arrangement is orthogonal and not antiparallel as in human enzyme.

The catalysed reaction is dTMP + ATP = dTDP + ADP. It participates in pyrimidine metabolism; dTTP biosynthesis. Its function is as follows. Poxvirus TMP kinase is able to phosphorylate dTMP, dUMP and also dGMP from any purine and pyrimidine nucleoside triphosphate. The large substrate specificity is explained by the presence of a canal connecting the edge of the dimer interface to the TMP base binding pocket, canal not found in the human homolog. This chain is Thymidylate kinase (OPG178), found in Homo sapiens (Human).